We begin with the raw amino-acid sequence, 386 residues long: Indole-3-acetate O-methyltransferase 1 (386 aa).

Position 30 (Tyr30) interacts with S-adenosyl-L-methionine. Residues Tyr30 and 33–37 (NSQAQ) contribute to the substrate site. S-adenosyl-L-methionine is bound by residues Gly72, 72 to 73 (GC), Asn78, 108 to 111 (FSDL), Asp110, 152 to 154 (SFY), and 169 to 171 (AFS). 170–174 (FSLHW) lines the substrate pocket. Positions 191, 195, 277, 278, 280, and 281 each coordinate Mg(2+). Residue Ser334 coordinates substrate.

Belongs to the methyltransferase superfamily. SABATH family. As to quaternary structure, homodimer. It depends on Mg(2+) as a cofactor. Expressed in seedling roots and leaves. Expressed in the stigma, funiculus, and vascular bundles in sepals, petals and stamens.

It carries out the reaction (indol-3-yl)acetate + S-adenosyl-L-methionine = methyl (indol-3-yl)acetate + S-adenosyl-L-homocysteine. In terms of biological role, catalyzes the methylation of the free carboxyl end of the plant hormone indole-3-acetic acid (IAA). Converts IAA to IAA methyl ester (MeIAA). Regulates IAA activities by IAA methylation. Methylation of IAA plays an important role in regulating plant development and auxin homeostasis. Required for correct leaf pattern formation. MeIAA seems to be an inactive form of IAA. The sequence is that of Indole-3-acetate O-methyltransferase 1 (IAMT1) from Arabidopsis thaliana (Mouse-ear cress).